Here is a 464-residue protein sequence, read N- to C-terminus: MTQKTRTRFAPSPTGFIHLGNIRSALYPWAFARATGGDFILRIEDTDVDRSSQAAVDVIIEGMRWLGLDYDEGPFYQMQRMDRYKAVLAEMVNAGHVYPCYMSVAELDALREAQMAAKEKPRYDGTWRPEPGKTLPAIPEGVQPVLRFKNPQGGAVVWDDKVKGRIEISNDELDDLVIARPDGTPTYNFCVVVDDMDMAITHVIRGDDHVNNTPRQINIFRALGREVPVYAHLPTVLNEQGEKMSKRNGAKPVTQYAAEGYLPDAMVNYLARLGWSHGDDEIFSREQFLQWFNLDHLGKSAAQFDEAKLRWVNAQHLKAMADDQLAERVQPFLAALDVSGLDAGWLAQSCALFKDRCSTLVELAGWLKLLVTGAEPSAQDVSTHVTDAVRPALAKLAQALATCEWTKAAIAAAIKQVLLDTGLKMPQLAMPVRVLLMGTPQTPSLDAILSLMAREKVIAKLNLV.

The 'HIGH' region signature appears at 11–21; it reads PSPTGFIHLGN. The 'KMSKS' region signature appears at 243–247; the sequence is KMSKR. Position 246 (lysine 246) interacts with ATP.

This sequence belongs to the class-I aminoacyl-tRNA synthetase family. Glutamate--tRNA ligase type 1 subfamily. Monomer.

The protein localises to the cytoplasm. The enzyme catalyses tRNA(Glu) + L-glutamate + ATP = L-glutamyl-tRNA(Glu) + AMP + diphosphate. Catalyzes the attachment of glutamate to tRNA(Glu) in a two-step reaction: glutamate is first activated by ATP to form Glu-AMP and then transferred to the acceptor end of tRNA(Glu). The polypeptide is Glutamate--tRNA ligase (Polaromonas naphthalenivorans (strain CJ2)).